A 401-amino-acid chain; its full sequence is Argininosuccinate synthase (401 aa).

Residue 8–16 participates in ATP binding; that stretch reads AYSGGLDTS. Position 85 (Y85) interacts with L-citrulline. G115 serves as a coordination point for ATP. Residues T117, N121, and D122 each coordinate L-aspartate. L-citrulline is bound at residue N121. L-citrulline is bound by residues R125, S173, E258, and Y270.

This sequence belongs to the argininosuccinate synthase family. Type 1 subfamily. Homotetramer.

The protein localises to the cytoplasm. It carries out the reaction L-citrulline + L-aspartate + ATP = 2-(N(omega)-L-arginino)succinate + AMP + diphosphate + H(+). It participates in amino-acid biosynthesis; L-arginine biosynthesis; L-arginine from L-ornithine and carbamoyl phosphate: step 2/3. The sequence is that of Argininosuccinate synthase from Staphylococcus carnosus (strain TM300).